Here is a 426-residue protein sequence, read N- to C-terminus: UDP-N-acetylglucosamine 1-carboxyvinyltransferase (426 aa).

Residue 22–23 coordinates phosphoenolpyruvate; sequence KN. Residue arginine 94 coordinates UDP-N-acetyl-alpha-D-glucosamine. The Proton donor role is filled by cysteine 118. A 2-(S-cysteinyl)pyruvic acid O-phosphothioketal modification is found at cysteine 118. UDP-N-acetyl-alpha-D-glucosamine is bound by residues 123-127, aspartate 309, and isoleucine 331; that span reads RPVDL.

It belongs to the EPSP synthase family. MurA subfamily.

Its subcellular location is the cytoplasm. The catalysed reaction is phosphoenolpyruvate + UDP-N-acetyl-alpha-D-glucosamine = UDP-N-acetyl-3-O-(1-carboxyvinyl)-alpha-D-glucosamine + phosphate. The protein operates within cell wall biogenesis; peptidoglycan biosynthesis. Functionally, cell wall formation. Adds enolpyruvyl to UDP-N-acetylglucosamine. This chain is UDP-N-acetylglucosamine 1-carboxyvinyltransferase, found in Paracoccus denitrificans (strain Pd 1222).